We begin with the raw amino-acid sequence, 397 residues long: Elongation factor Tu (397 aa).

The 198-residue stretch at 10–207 folds into the tr-type G domain; sequence LPHVNVGTIG…TLDSYIPEPE (198 aa). The segment at 19–26 is G1; it reads GHVDHGKT. 19–26 contacts GTP; sequence GHVDHGKT. Position 26 (threonine 26) interacts with Mg(2+). Residues 60–64 are G2; that stretch reads GITIN. Positions 81 to 84 are G3; it reads DCPG. Residues 81-85 and 136-139 contribute to the GTP site; these read DCPGH and NKAD. Residues 136-139 form a G4 region; sequence NKAD. The G5 stretch occupies residues 174–176; sequence SAR.

Belongs to the TRAFAC class translation factor GTPase superfamily. Classic translation factor GTPase family. EF-Tu/EF-1A subfamily. In terms of assembly, monomer.

It localises to the cytoplasm. The catalysed reaction is GTP + H2O = GDP + phosphate + H(+). GTP hydrolase that promotes the GTP-dependent binding of aminoacyl-tRNA to the A-site of ribosomes during protein biosynthesis. This Pseudomonas fluorescens (strain Pf0-1) protein is Elongation factor Tu.